Reading from the N-terminus, the 199-residue chain is Thymidine kinase (199 aa).

ATP is bound by residues 23-30 and 95-98; these read GSMFSGKT and DEAQ. Glutamate 96 serves as the catalytic Proton acceptor. Positions 152, 155, 184, and 187 each coordinate Zn(2+).

The protein belongs to the thymidine kinase family. In terms of assembly, homotetramer.

It is found in the cytoplasm. The catalysed reaction is thymidine + ATP = dTMP + ADP + H(+). The chain is Thymidine kinase from Bacteroides fragilis (strain YCH46).